Here is an 875-residue protein sequence, read N- to C-terminus: Agglutinin-like protein 4 (875 aa).

The signal sequence occupies residues 1-17; sequence MLLQFLLLSLCVSVATA. Intrachain disulfides connect cysteine 73-cysteine 150, cysteine 96-cysteine 112, cysteine 205-cysteine 298, and cysteine 227-cysteine 256. ALS repeat units follow at residues 365–396, 401–432, 438–469, and 474–502; these read TTIT…VDVP, TTVT…VQVP, VTTT…IREP, and VTTT…SVII. Asparagine 542 is a glycosylation site (N-linked (GlcNAc...) asparagine). Disordered stretches follow at residues 546-580 and 619-837; these read THLP…GSEN and TTII…LSQQ. A compositionally biased stretch (low complexity) spans 549–578; it reads PSSSSKPVDIPSSDVVTSTNDNSLTSLTGS. N-linked (GlcNAc...) asparagine glycosylation is present at asparagine 626. Positions 627-641 are enriched in low complexity; that stretch reads GSGKSKSGELSSTGS. A compositionally biased stretch (polar residues) spans 674–715; that stretch reads STETQTTNNVPGSPNIPATGTTDIRESTTVSHTVTGNGNTGV. Low complexity predominate over residues 722–746; sequence ALTTSTSLTGATNSATNPSHETGVN. The segment covering 755–764 has biased composition (polar residues); the sequence is IVTPPSSATA. 2 N-linked (GlcNAc...) asparagine glycosylation sites follow: asparagine 789 and asparagine 811. Low complexity-rich tracts occupy residues 789-816 and 827-837; these read NGST…TGEP and SISQPTTLSQQ. Aspartate 852 carries GPI-anchor amidated aspartate lipidation. Residues 853–875 constitute a propeptide, removed in mature form; sequence GSGSIVQHSAWLYVLLTAISIFF.

This sequence belongs to the ALS family. Post-translationally, N-glycosylated and O-glycosylated.

Its subcellular location is the cell membrane. It localises to the secreted. The protein resides in the cell wall. Functionally, cell surface adhesion protein which mediates both yeast-to-host tissue adherence and yeast aggregation. Plays an important role in the pathogenesis of C.albicans infections. In Candida albicans (Yeast), this protein is Agglutinin-like protein 4 (ALS4).